Consider the following 416-residue polypeptide: Serine/threonine-protein phosphatase PP2A-like PPG1 (416 aa).

4 residues coordinate Mn(2+): Asp62, His64, Asp90, and Asn122. His123 (proton donor) is an active-site residue. Mn(2+)-binding residues include His173 and His248. The tract at residues 363–391 (EDTLQGKSVNGINFDDELSTSDDTSGSGG) is disordered.

This sequence belongs to the PPP phosphatase family. PP-2A subfamily. Mn(2+) is required as a cofactor.

The catalysed reaction is O-phospho-L-seryl-[protein] + H2O = L-seryl-[protein] + phosphate. The enzyme catalyses O-phospho-L-threonyl-[protein] + H2O = L-threonyl-[protein] + phosphate. Its activity is regulated as follows. Inhibited by okadaic acid, a specific inhibitor of serine/threonine phosphatases of types 1, 2A and 2B. In terms of biological role, serine/threonine-protein phosphatase that plays an important role in controlling colony morphology, filament extension and agar invasion. Down-regulates expression of NRG1 and affects the expression of multiple filament-specific transcripts in response to serum and 37 degrees Celsius. Plays a crucial role in virulence in a mouse model of systemic candidiasis. This is Serine/threonine-protein phosphatase PP2A-like PPG1 from Candida albicans (strain SC5314 / ATCC MYA-2876) (Yeast).